A 150-amino-acid chain; its full sequence is D-aminoacyl-tRNA deacylase (150 aa).

A Gly-cisPro motif, important for rejection of L-amino acids motif is present at residues 136-137; the sequence is GP.

It belongs to the DTD family. In terms of assembly, homodimer.

Its subcellular location is the cytoplasm. The catalysed reaction is glycyl-tRNA(Ala) + H2O = tRNA(Ala) + glycine + H(+). It carries out the reaction a D-aminoacyl-tRNA + H2O = a tRNA + a D-alpha-amino acid + H(+). Its function is as follows. An aminoacyl-tRNA editing enzyme that deacylates mischarged D-aminoacyl-tRNAs. Also deacylates mischarged glycyl-tRNA(Ala), protecting cells against glycine mischarging by AlaRS. Acts via tRNA-based rather than protein-based catalysis; rejects L-amino acids rather than detecting D-amino acids in the active site. By recycling D-aminoacyl-tRNA to D-amino acids and free tRNA molecules, this enzyme counteracts the toxicity associated with the formation of D-aminoacyl-tRNA entities in vivo and helps enforce protein L-homochirality. This is D-aminoacyl-tRNA deacylase from Staphylococcus haemolyticus (strain JCSC1435).